Here is a 351-residue protein sequence, read N- to C-terminus: Formyl peptide receptor-related sequence 1 (351 aa).

At 1-27 (METNYSIPLNGSDVVIYDSTISRVLWI) the chain is on the extracellular side. Residues N4 and N10 are each glycosylated (N-linked (GlcNAc...) asparagine). A helical membrane pass occupies residues 28–50 (LSMVVVSITFFLGVLGNGLVIWV). The Cytoplasmic portion of the chain corresponds to 51–61 (AGFRMPHTVTT). Residues 62–83 (IWYLNLALADFSFTATLPFLLV) form a helical membrane-spanning segment. The Extracellular portion of the chain corresponds to 84 to 100 (EMAMKEKWPFGWFLCKL). A disulfide bridge links C98 with C176. A helical transmembrane segment spans residues 101–121 (VHIAVDVNLFGSVFLIAVIAL). Residues 122 to 140 (DRCICVLHPVWAQNHRTVS) lie on the Cytoplasmic side of the membrane. A helical membrane pass occupies residues 141–162 (LARNVVVGSWIFALILTLPLFL). The Extracellular portion of the chain corresponds to 163–205 (FLTTVRDARGDVHCRLSFVSWGNSVEERLNTAITFVTTRGIIR). A helical membrane pass occupies residues 206 to 226 (FIVSFSLPMSFVAICYGLITT). At 227–242 (KIHKKAFVNSSRPFRV) the chain is on the cytoplasmic side. The helical transmembrane segment at 243 to 266 (LTGVVASFFICWFPFQLVALLGTV) threads the bilayer. Residues 267-286 (WLKEMQFSGSYKIIGRLVNP) lie on the Extracellular side of the membrane. A helical transmembrane segment spans residues 287–306 (TSSLAFFNSCLNPILYVFMG). The Cytoplasmic portion of the chain corresponds to 307–351 (QDFQERLIHSLSSRLQRALSEDSGHISDTRTNLASLPEDIEIKAI).

It belongs to the G-protein coupled receptor 1 family. As to expression, expressed exclusively in vomeronasal neurons. Expressed in 0.6 % of a subset of sensory neurons located in the basal layer of the vomeronasal organ. Each neuron appears to express only one receptor gene. Expressed mostly in neutrophils, followed by spleen and lung and expressed at very low levels in heart and liver.

The protein localises to the cell membrane. Functionally, low affinity receptor for N-formyl-methionyl peptides. Receptor for lipoxin A4. May have an olfactory function associated with the identification of pathogens or of pathogenic states. The sequence is that of Formyl peptide receptor-related sequence 1 (Fpr-s1) from Mus musculus (Mouse).